Consider the following 1313-residue polypeptide: Inter-alpha-trypsin inhibitor heavy chain H6 (1313 aa).

A signal peptide spans 1–23 (MSGWRYLICVSFLLTILLELTYQ). The region spanning 24 to 150 (GPPVPASSST…EVTFSLAYEE (127 aa)) is the VIT domain. N-linked (GlcNAc...) asparagine glycans are attached at residues asparagine 83, asparagine 374, asparagine 540, and asparagine 594. One can recognise a VWFA domain in the interval 283-469 (NVVFVIDVSS…LQLKGLYEEI (187 aa)). Disordered stretches follow at residues 612 to 644 (QPKQ…HGLG), 783 to 817 (HSKP…TLQV), 856 to 928 (LKPS…EPLP), and 959 to 983 (PSRP…SPPN). The segment covering 623 to 640 (QTSTSAGPDTIMPSSSSR) has biased composition (polar residues). Positions 864–875 (QISTSISLSKPE) are enriched in polar residues. The span at 876 to 888 (TPNPHMPQTPLPP) shows a compositional bias: pro residues. Low complexity predominate over residues 907-921 (TISSSTGPSSTTTTS). 2 N-linked (GlcNAc...) asparagine glycosylation sites follow: asparagine 971 and asparagine 1231.

It belongs to the ITIH family.

Its subcellular location is the secreted. This Homo sapiens (Human) protein is Inter-alpha-trypsin inhibitor heavy chain H6 (ITIH6).